The primary structure comprises 1003 residues: Phosphoenolpyruvate carboxylase (1003 aa).

Residues 1–24 (MIMTVSDPGGSSMSSSSAITPESE) are disordered. Residues His190 and Lys646 contribute to the active site.

This sequence belongs to the PEPCase type 1 family. It depends on Mg(2+) as a cofactor.

It catalyses the reaction oxaloacetate + phosphate = phosphoenolpyruvate + hydrogencarbonate. Its function is as follows. Forms oxaloacetate, a four-carbon dicarboxylic acid source for the tricarboxylic acid cycle. This is Phosphoenolpyruvate carboxylase from Synechococcus sp. (strain WH7803).